The sequence spans 258 residues: MNKKIEELNKLDKKVVLAPMAGITDGDFCRKFKDLFAIVTIGGYNLDSATYKASRDIEKRGRKEFSINLEEFNSYIIEQIKKARESNALVSVNVRFVDIDEAYDKLLTIAKHADIIELNCHCRQPEITSLGIGQELMKNKNLLKEFLTKMKELNKPIFLKIRLNCIPLKELIDNLNYVRDYFDGLHVDCFYPGKPYADMDSLKILAEEFNDKIIIGNNSIDSIEKAKEMLKYSDFVSVARTILKGNVEWIKELNKENI.

This is an uncharacterized protein from Methanocaldococcus jannaschii (strain ATCC 43067 / DSM 2661 / JAL-1 / JCM 10045 / NBRC 100440) (Methanococcus jannaschii).